The following is a 456-amino-acid chain: Gamma-aminobutyric acid receptor subunit alpha-1 (456 aa).

Positions 1 to 27 (MRKSPGLSDCLWAWILLLSTLTGRSYG) are cleaved as a signal peptide. The Extracellular segment spans residues 28–253 (QPSLQDELKD…FHLKRKIGYF (226 aa)). An N-linked (GlcNAc...) asparagine glycan is attached at Asn38. Arg94 contributes to the 4-aminobutanoate binding site. Residue Asn138 is glycosylated (N-linked (GlcNAc...) asparagine). Thr157 lines the 4-aminobutanoate pocket. Cys166 and Cys180 are joined by a disulfide. Residues 254–274 (VIQTYLPCIMTVILSQVSFWL) traverse the membrane as a helical segment. Over 275–279 (NRESV) the chain is Cytoplasmic. A helical membrane pass occupies residues 280 to 301 (PARTVFGVTTVLTMTTLSISAR). The Extracellular segment spans residues 302–311 (NSLPKVAYAT). A helical membrane pass occupies residues 312-333 (AMDWFIAVCYAFVFSALIEFAT). Over 334–421 (VNYFTKRGYA…TFNSVSKIDR (88 aa)) the chain is Cytoplasmic. Residues 422–441 (LSRIAFPLLFGIFNLIYWAT) form a helical membrane-spanning segment. The Extracellular portion of the chain corresponds to 442–456 (YLNREPQLKAPTPHQ).

This sequence belongs to the ligand-gated ion channel (TC 1.A.9) family. Gamma-aminobutyric acid receptor (TC 1.A.9.5) subfamily. GABRA1 sub-subfamily. As to quaternary structure, heteropentamer, formed by a combination of alpha (GABRA1-6), beta (GABRB1-3), gamma (GABRG1-3), delta (GABRD), epsilon (GABRE), rho (GABRR1-3), pi (GABRP) and theta (GABRQ) subunits, each subunit exhibiting distinct physiological and pharmacological properties. Interacts with UBQLN1. Interacts with TRAK1. Interacts with KIF21B. Identified in a complex of 720 kDa composed of LHFPL4, NLGN2, GABRA1, GABRB2, GABRG2 and GABRB3. Interacts with LHFPL4. Interacts with NLGN2. Interacts with SHISA7; interaction leads to the regulation of GABA(A) receptor trafficking, channel deactivation kinetics and pharmacology.

The protein resides in the postsynaptic cell membrane. It localises to the cell membrane. The protein localises to the cytoplasmic vesicle membrane. The catalysed reaction is chloride(in) = chloride(out). Its activity is regulated as follows. Allosterically activated by benzodiazepines, the neuroanesthetic alphaxalone and pentobarbital. Inhibited by the antagonist bicuculline. Potentiated by histamine. In terms of biological role, alpha subunit of the heteropentameric ligand-gated chloride channel gated by gamma-aminobutyric acid (GABA), a major inhibitory neurotransmitter in the brain. GABA-gated chloride channels, also named GABA(A) receptors (GABAAR), consist of five subunits arranged around a central pore and contain GABA active binding site(s) located at the alpha and beta subunit interface(s). When activated by GABA, GABAARs selectively allow the flow of chloride anions across the cell membrane down their electrochemical gradient. Alpha-1/GABRA1-containing GABAARs are largely synaptic. Chloride influx into the postsynaptic neuron following GABAAR opening decreases the neuron ability to generate a new action potential, thereby reducing nerve transmission. GABAARs containing alpha-1 and beta-2 or -3 subunits exhibit synaptogenic activity; the gamma-2 subunit being necessary but not sufficient to induce rapid synaptic contacts formation. GABAARs function also as histamine receptor where histamine binds at the interface of two neighboring beta subunits and potentiates GABA response. GABAARs containing alpha, beta and epsilon subunits also permit spontaneous chloride channel activity while preserving the structural information required for GABA-gated openings. Alpha-1-mediated plasticity in the orbitofrontal cortex regulates context-dependent action selection. Together with rho subunits, may also control neuronal and glial GABAergic transmission in the cerebellum. This chain is Gamma-aminobutyric acid receptor subunit alpha-1 (GABRA1), found in Pongo abelii (Sumatran orangutan).